A 298-amino-acid polypeptide reads, in one-letter code: Putative S-adenosyl-L-methionine-dependent methyltransferase MSMEG_1480/MSMEI_1444 (298 aa).

Residues aspartate 127 and 156–157 (DL) contribute to the S-adenosyl-L-methionine site.

Belongs to the UPF0677 family.

In terms of biological role, exhibits S-adenosyl-L-methionine-dependent methyltransferase activity. The polypeptide is Putative S-adenosyl-L-methionine-dependent methyltransferase MSMEG_1480/MSMEI_1444 (Mycolicibacterium smegmatis (strain ATCC 700084 / mc(2)155) (Mycobacterium smegmatis)).